Reading from the N-terminus, the 737-residue chain is uncharacterized protein (737 aa).

7 helical membrane passes run 11-31, 36-56, 60-80, 118-138, 142-162, 164-184, and 200-220; these read LSLL…LRPL, ETKH…LTFF, WFVT…ILFY, TLLF…WVIY, ILFF…FTPY, ATFA…LLYL, and VLKW…FGLA. The disordered stretch occupies residues 556 to 611; the sequence is PAQFTSSDTKDSGSDSSSSPKKAKEKQKEEKKQPQKEEKQKEKREPAVSKKPSASH. Residues 581–603 are compositionally biased toward basic and acidic residues; that stretch reads KQKEEKKQPQKEEKQKEKREPAV. The helical transmembrane segment at 618–638 threads the bilayer; it reads LYAALAVLAVLLVAAVLLYVF.

The protein localises to the cell membrane. This is an uncharacterized protein from Bacillus subtilis (strain 168).